The sequence spans 1155 residues: uncharacterized protein (1155 aa).

The first 19 residues, 1 to 19, serve as a signal peptide directing secretion; it reads MNKNIFITLLISSLLLLSG. A lipid anchor (N-palmitoyl cysteine) is attached at C20. C20 carries the S-diacylglycerol cysteine lipid modification. 4 consecutive transmembrane segments (helical) span residues 291–311, 395–415, 424–444, and 459–479; these read VSAILTLYIMFTGFSFLIGNI, LGFIYIILYLIALYFIFFLIF, ALITIGMIIIMGPIFICFMLF, and ISYALQPIILFAGIAFISMII.

This sequence belongs to the TrbL/VirB6 family.

It localises to the cell membrane. This is an uncharacterized protein from Rickettsia felis (strain ATCC VR-1525 / URRWXCal2) (Rickettsia azadi).